Here is a 241-residue protein sequence, read N- to C-terminus: Large ribosomal subunit protein uL3 (241 aa).

The interval 140–168 is disordered; it reads SHRSIGSTGGRQDPGKTFKNKKMPGHMGD. Gln-151 is modified (N5-methylglutamine).

It belongs to the universal ribosomal protein uL3 family. As to quaternary structure, part of the 50S ribosomal subunit. Forms a cluster with proteins L14 and L19. Post-translationally, methylated by PrmB.

Functionally, one of the primary rRNA binding proteins, it binds directly near the 3'-end of the 23S rRNA, where it nucleates assembly of the 50S subunit. The polypeptide is Large ribosomal subunit protein uL3 (Azorhizobium caulinodans (strain ATCC 43989 / DSM 5975 / JCM 20966 / LMG 6465 / NBRC 14845 / NCIMB 13405 / ORS 571)).